The sequence spans 209 residues: Imidazole glycerol phosphate synthase subunit HisH (209 aa).

The 205-residue stretch at 1 to 205 folds into the Glutamine amidotransferase type-1 domain; that stretch reads MIAIIDYGMG…KGVVETWKSS (205 aa). Residue C79 is the Nucleophile of the active site. Catalysis depends on residues H180 and E182.

Heterodimer of HisH and HisF.

The protein resides in the cytoplasm. The catalysed reaction is 5-[(5-phospho-1-deoxy-D-ribulos-1-ylimino)methylamino]-1-(5-phospho-beta-D-ribosyl)imidazole-4-carboxamide + L-glutamine = D-erythro-1-(imidazol-4-yl)glycerol 3-phosphate + 5-amino-1-(5-phospho-beta-D-ribosyl)imidazole-4-carboxamide + L-glutamate + H(+). It catalyses the reaction L-glutamine + H2O = L-glutamate + NH4(+). Its pathway is amino-acid biosynthesis; L-histidine biosynthesis; L-histidine from 5-phospho-alpha-D-ribose 1-diphosphate: step 5/9. In terms of biological role, IGPS catalyzes the conversion of PRFAR and glutamine to IGP, AICAR and glutamate. The HisH subunit catalyzes the hydrolysis of glutamine to glutamate and ammonia as part of the synthesis of IGP and AICAR. The resulting ammonia molecule is channeled to the active site of HisF. This chain is Imidazole glycerol phosphate synthase subunit HisH, found in Bacillus anthracis (strain CDC 684 / NRRL 3495).